A 741-amino-acid polypeptide reads, in one-letter code: D-(-)-3-hydroxybutyrate oligomer hydrolase (741 aa).

Residues 1-23 form the signal peptide; that stretch reads MKTIQGKSPGRWYSRGMLLAAMA. The interval 45–68 is disordered; the sequence is NGNAGGNGNNNGNNNGNTVSNTKP. The active-site Charge relay system is Ser338.

The protein belongs to the D-(-)-3-hydroxybutyrate oligomer hydrolase family.

The protein resides in the secreted. The catalysed reaction is (3R)-hydroxybutanoate dimer + H2O = 2 (R)-3-hydroxybutanoate + H(+). Its pathway is lipid metabolism; butanoate metabolism. Participates in the degradation of poly-3-hydroxybutyrate (PHB). It works downstream of poly(3-hydroxybutyrate) depolymerase, hydrolyzing D(-)-3-hydroxybutyrate oligomers of various length (3HB-oligomers) into 3HB-monomers. This is D-(-)-3-hydroxybutyrate oligomer hydrolase from Ralstonia pickettii (Burkholderia pickettii).